The sequence spans 342 residues: S-adenosylmethionine:tRNA ribosyltransferase-isomerase (342 aa).

This sequence belongs to the QueA family. Monomer.

The protein resides in the cytoplasm. It carries out the reaction 7-aminomethyl-7-carbaguanosine(34) in tRNA + S-adenosyl-L-methionine = epoxyqueuosine(34) in tRNA + adenine + L-methionine + 2 H(+). It functions in the pathway tRNA modification; tRNA-queuosine biosynthesis. In terms of biological role, transfers and isomerizes the ribose moiety from AdoMet to the 7-aminomethyl group of 7-deazaguanine (preQ1-tRNA) to give epoxyqueuosine (oQ-tRNA). This is S-adenosylmethionine:tRNA ribosyltransferase-isomerase from Oceanobacillus iheyensis (strain DSM 14371 / CIP 107618 / JCM 11309 / KCTC 3954 / HTE831).